Reading from the N-terminus, the 200-residue chain is Protein GrpE (200 aa).

Basic and acidic residues predominate over residues methionine 1–proline 27. The segment at methionine 1–alanine 50 is disordered. Residues methionine 32–threonine 41 are compositionally biased toward acidic residues.

Belongs to the GrpE family. Homodimer.

Its subcellular location is the cytoplasm. Participates actively in the response to hyperosmotic and heat shock by preventing the aggregation of stress-denatured proteins, in association with DnaK and GrpE. It is the nucleotide exchange factor for DnaK and may function as a thermosensor. Unfolded proteins bind initially to DnaJ; upon interaction with the DnaJ-bound protein, DnaK hydrolyzes its bound ATP, resulting in the formation of a stable complex. GrpE releases ADP from DnaK; ATP binding to DnaK triggers the release of the substrate protein, thus completing the reaction cycle. Several rounds of ATP-dependent interactions between DnaJ, DnaK and GrpE are required for fully efficient folding. This Latilactobacillus sakei subsp. sakei (strain 23K) (Lactobacillus sakei subsp. sakei) protein is Protein GrpE.